The chain runs to 475 residues: Glycogen synthase (475 aa).

Residue K15 participates in ADP-alpha-D-glucose binding.

It belongs to the glycosyltransferase 1 family. Bacterial/plant glycogen synthase subfamily.

It catalyses the reaction [(1-&gt;4)-alpha-D-glucosyl](n) + ADP-alpha-D-glucose = [(1-&gt;4)-alpha-D-glucosyl](n+1) + ADP + H(+). It functions in the pathway glycan biosynthesis; glycogen biosynthesis. Functionally, synthesizes alpha-1,4-glucan chains using ADP-glucose. This is Glycogen synthase from Clostridium kluyveri (strain ATCC 8527 / DSM 555 / NBRC 12016 / NCIMB 10680 / K1).